The chain runs to 335 residues: Adenosine deaminase (335 aa).

Zn(2+)-binding residues include H12 and H14. 2 residues coordinate substrate: H14 and D16. Residue H197 coordinates Zn(2+). Catalysis depends on E200, which acts as the Proton donor. D278 contributes to the Zn(2+) binding site.

It belongs to the metallo-dependent hydrolases superfamily. Adenosine and AMP deaminases family. Adenosine deaminase subfamily. Zn(2+) serves as cofactor.

The enzyme catalyses adenosine + H2O + H(+) = inosine + NH4(+). It catalyses the reaction 2'-deoxyadenosine + H2O + H(+) = 2'-deoxyinosine + NH4(+). Functionally, catalyzes the hydrolytic deamination of adenosine and 2-deoxyadenosine. The chain is Adenosine deaminase from Clostridium botulinum (strain Langeland / NCTC 10281 / Type F).